The sequence spans 394 residues: Elongation factor Tu (394 aa).

Positions 10–204 (KPHINIGTIG…AVDDNIPTPE (195 aa)) constitute a tr-type G domain. Positions 19–26 (GHVDHGKT) are G1. Position 19-26 (19-26 (GHVDHGKT)) interacts with GTP. Position 26 (Thr-26) interacts with Mg(2+). Residues 60–64 (GITIN) are G2. Positions 81-84 (DCPG) are G3. GTP contacts are provided by residues 81 to 85 (DCPGH) and 136 to 139 (NKID). The interval 136-139 (NKID) is G4. The interval 174 to 176 (SAL) is G5.

The protein belongs to the TRAFAC class translation factor GTPase superfamily. Classic translation factor GTPase family. EF-Tu/EF-1A subfamily. In terms of assembly, monomer.

Its subcellular location is the cytoplasm. The catalysed reaction is GTP + H2O = GDP + phosphate + H(+). Functionally, GTP hydrolase that promotes the GTP-dependent binding of aminoacyl-tRNA to the A-site of ribosomes during protein biosynthesis. In Chlamydia trachomatis serovar L2 (strain ATCC VR-902B / DSM 19102 / 434/Bu), this protein is Elongation factor Tu.